The sequence spans 1481 residues: ABC multidrug transporter atrH (1481 aa).

A compositionally biased stretch (basic and acidic residues) spans 1–10; the sequence is MALPREERSL. Disordered stretches follow at residues 1-45 and 61-89; these read MALP…GIEQ and ISQTNSGTEGLNPFLNTSDPELDPNSDQF. 3 N-linked (GlcNAc...) asparagine glycosylation sites follow: asparagine 19, asparagine 76, and asparagine 320. The 263-residue stretch at 134–396 folds into the ABC transporter 1 domain; sequence ATVSNVWLKA…FIEMGFDCPE (263 aa). Residues 507–527 form a helical membrane-spanning segment; that stretch reads MTLSTVIGNSILALIISSVFY. N-linked (GlcNAc...) asparagine glycosylation occurs at asparagine 530. 5 consecutive transmembrane segments (helical) span residues 542-562, 587-607, 616-636, 650-670, and 758-778; these read LLFFAILLNAFASALEMLTLW, LIVDLPAKAPVSIVFNLILYF, GHFFVFYLFSVTTTLTMSNVF, EVPASIFMMILMIYTGFTIPV, and FGILLGFLFFSLVAYIVASEL. One can recognise an ABC transporter 2 domain in the interval 838–1081; sequence FHWQDVCYDI…LIKYFEDKGS (244 aa). 874–881 is an ATP binding site; sequence GVTGAGKT. Helical transmembrane passes span 1174–1194, 1210–1230, 1249–1269, 1298–1318, 1327–1347, and 1358–1378; these read YIYAKAAMCIIPPLFIGFTFW, IFMLLVIFPNLVQQMMPYFAM, AFMLASIVVELPWNMLMAVPA, LLVLIFMLFTSTFSSMMIAGI, IAQLMFSMCLIFCGVLASPDV, and ASPFSYLVGSVLAVGIAGAPV. N-linked (GlcNAc...) asparagine glycosylation occurs at asparagine 1395. A helical transmembrane segment spans residues 1446–1466; it reads VGILFVYIVFNTVAAVFLYWL.

The protein belongs to the ABC transporter superfamily. ABCG family. PDR (TC 3.A.1.205) subfamily.

The protein resides in the cell membrane. Its function is as follows. Pleiotropic ABC efflux transporter involved in the basal level of azole susceptibility. In Aspergillus oryzae (strain ATCC 42149 / RIB 40) (Yellow koji mold), this protein is ABC multidrug transporter atrH.